A 183-amino-acid polypeptide reads, in one-letter code: Calcineurin subunit B type 2 (183 aa).

G2 is lipidated: N-myristoyl glycine. EF-hand domains are found at residues 25 to 60 (REIK…SMNP), 64 to 92 (RIIS…FHPK), 94 to 129 (DKAD…MVGS), and 135 to 170 (QISS…SGCN). Ca(2+)-binding residues include D107, N109, D111, and E118.

The protein belongs to the calcineurin regulatory subunit family. In terms of assembly, calcineurin is composed of a catalytic subunit (A) and a regulatory subunit (B).

Functionally, regulatory subunit of calcineurin, a calcium-dependent, calmodulin stimulated protein phosphatase. Confers calcium sensitivity. The protein is Calcineurin subunit B type 2 (cnbB) of Dictyostelium discoideum (Social amoeba).